Consider the following 573-residue polypeptide: Mitochondrial distribution and morphology protein 34 (573 aa).

An SMP-LTD domain is found at 1-195 (MAFNFNWSPL…LPAIIHRLSL (195 aa)). 4 disordered regions span residues 301-326 (EGLGSGLMSPGSPALSRTHSHISSPL), 349-433 (FSGY…RFPN), 499-521 (SREKSMEAQSSHGPNPGLSITDA), and 550-573 (LVNNNYPGPWEQTRARTPPPAYGQ). Low complexity predominate over residues 306–316 (GLMSPGSPALS). Basic residues predominate over residues 360–373 (RHTKARPTKKRKKR). The segment covering 374–385 (VVDLRKQSKPTD) has biased composition (basic and acidic residues). The span at 396–409 (TETSTASTTFSSST) shows a compositional bias: low complexity.

This sequence belongs to the MDM34 family. In terms of assembly, component of the ER-mitochondria encounter structure (ERMES) or MDM complex, composed of MMM1, MDM10, MDM12 and MDM34.

Its subcellular location is the mitochondrion outer membrane. Component of the ERMES/MDM complex, which serves as a molecular tether to connect the endoplasmic reticulum (ER) and mitochondria. Components of this complex are involved in the control of mitochondrial shape and protein biogenesis, and function in nonvesicular lipid trafficking between the ER and mitochondria. MDM34 is required for the interaction of the ER-resident membrane protein MMM1 and the outer mitochondrial membrane-resident beta-barrel protein MDM10. This Uncinocarpus reesii (strain UAMH 1704) protein is Mitochondrial distribution and morphology protein 34.